A 351-amino-acid chain; its full sequence is Phospho-N-acetylmuramoyl-pentapeptide-transferase (351 aa).

The next 10 membrane-spanning stretches (helical) occupy residues 22–42 (ILAFFLSFFITIFIMPKFISW), 65–85 (TPTMGGLIYITSAVISILITT), 87–107 (FNKYVLLTLLLLVYFTYLGFI), 128–148 (FLLQWVGALVISYLLIKVGFD), 158–178 (YPIFDMGYYAVIFWAFIIVAM), 190–210 (GLATVPSIFSLFTLGILLYIV), 225–245 (LGVGELTIIVFALIGALLGFL), 254–274 (VFMGDSGSLPLGAVIGFLAIV), 279–299 (LLLIFIAFVFIMETVSVILQV), and 328–348 (KITIRFWIMALITNLIAILSI).

Belongs to the glycosyltransferase 4 family. MraY subfamily. Mg(2+) is required as a cofactor.

The protein localises to the cell inner membrane. It catalyses the reaction UDP-N-acetyl-alpha-D-muramoyl-L-alanyl-gamma-D-glutamyl-meso-2,6-diaminopimeloyl-D-alanyl-D-alanine + di-trans,octa-cis-undecaprenyl phosphate = di-trans,octa-cis-undecaprenyl diphospho-N-acetyl-alpha-D-muramoyl-L-alanyl-D-glutamyl-meso-2,6-diaminopimeloyl-D-alanyl-D-alanine + UMP. It functions in the pathway cell wall biogenesis; peptidoglycan biosynthesis. Its function is as follows. Catalyzes the initial step of the lipid cycle reactions in the biosynthesis of the cell wall peptidoglycan: transfers peptidoglycan precursor phospho-MurNAc-pentapeptide from UDP-MurNAc-pentapeptide onto the lipid carrier undecaprenyl phosphate, yielding undecaprenyl-pyrophosphoryl-MurNAc-pentapeptide, known as lipid I. This Nautilia profundicola (strain ATCC BAA-1463 / DSM 18972 / AmH) protein is Phospho-N-acetylmuramoyl-pentapeptide-transferase.